A 208-amino-acid chain; its full sequence is CKLF-like MARVEL transmembrane domain-containing protein 4 (208 aa).

Residues methionine 1–glutamate 11 are compositionally biased toward acidic residues. Residues methionine 1–arginine 38 form a disordered region. The segment covering serine 15–serine 25 has biased composition (low complexity). The MARVEL domain maps to tyrosine 49–arginine 176. Transmembrane regions (helical) follow at residues valine 59–serine 79, tyrosine 85–phenylalanine 105, leucine 123–leucine 143, and isoleucine 151–alanine 171. Serine 194 bears the Phosphoserine mark.

Belongs to the chemokine-like factor family. As to quaternary structure, interacts with PD1L1 and CMTM6.

Its subcellular location is the membrane. In terms of biological role, acts as a backup for CMTM6 to regulate plasma membrane expression of PD-L1/CD274, an immune inhibitory ligand critical for immune tolerance to self and antitumor immunity. May protect PD-L1/CD274 from being polyubiquitinated and targeted for degradation. The polypeptide is CKLF-like MARVEL transmembrane domain-containing protein 4 (Mus musculus (Mouse)).